The sequence spans 849 residues: Lysine-specific histone demethylase 1 homolog 1 (849 aa).

Residues 1–118 form a disordered region; that stretch reads MEEGSEAQPP…RRRRKKQFPG (118 aa). Composition is skewed to low complexity over residues 34-67 and 89-103; these read GQAAAAEAMEGEAEGAAAAAGTIEGEAGYAAADA and PTSSAPSATAAVDDS. Residues 106 to 115 show a composition bias toward basic residues; it reads ARKRRRRKKQ. Positions 159-260 constitute an SWIRM domain; sequence ARELDAEALI…FGLAPSVISL (102 aa). FAD contacts are provided by Glu-300, Arg-302, Arg-308, and Glu-688.

This sequence belongs to the flavin monoamine oxidase family. Requires FAD as cofactor.

Its function is as follows. Probable histone demethylase. This Oryza sativa subsp. japonica (Rice) protein is Lysine-specific histone demethylase 1 homolog 1.